Here is a 240-residue protein sequence, read N- to C-terminus: Protein unc-119 homolog A (240 aa).

Residues 1-12 (MKVKKGGGGAGT) are compositionally biased toward gly residues. The disordered stretch occupies residues 1 to 61 (MKVKKGGGGA…GPLQRKQRIG (61 aa)). Over residues 13-23 (GAEPASGAPGP) the composition is skewed to low complexity. Phosphoserine; by CK2 occurs at positions 37, 39, and 41. Residue Y131 participates in tetradecanoate binding.

It belongs to the PDE6D/unc-119 family. Interacts with CABP4; in the absence of calcium. May interact with GTP-bound ARL1. Interacts with ARL2 and ARL3 (GTP-bound forms); this promotes the release of myristoylated cargo proteins. Found in a complex with ARL3, RP2 and UNC119; RP2 induces hydrolysis of GTP ARL3 in the complex, leading to the release of UNC119. Interacts with NPHP3 (when myristoylated). Interacts with CYS1 (when myristoylated). Interacts with MACIR; interaction only takes place when UNC119 is not liganded with myristoylated proteins. Interacts with LCK; this interaction plays a crucial role in activation of LCK. Interacts with FYN. Interacts with RAB11A; in a cell cycle-dependent manner. Interacts with LYN (via SH2 and SH3 domains); leading to LYN activation. Interacts with DNM1; leading to a decrease of DNM1 GTPase activity. Found in a complex with ABL1, ABL2, CRK and UNC119; leading to the inhibition of CRK phosphorylation by ABL kinases. Interacts with CD44. Interacts with KLHL18 (via kelch repeats). Interacts with PPP3CA, PPP3CB and PPP3CC. Interacts with USP48; this interaction promotes UNC119 stability. In terms of processing, phosphorylation suppresses its interaction with KLHL18 and down-regulates its KLHL18-mediated degradation. Phosphorylated more under light conditions than dark conditions. Dephosphorylated by calcineurin.

It localises to the cytoplasm. Its subcellular location is the cytoskeleton. It is found in the microtubule organizing center. The protein localises to the centrosome. The protein resides in the spindle. It localises to the spindle pole. Involved in synaptic functions in photoreceptor cells, the signal transduction in immune cells as a Src family kinase activator, endosome recycling, the uptake of bacteria and endocytosis, protein trafficking in sensory neurons and as lipid-binding chaperone with specificity for a diverse subset of myristoylated proteins. Specifically binds the myristoyl moiety of a subset of N-terminally myristoylated proteins and is required for their localization. Binds myristoylated GNAT1 and is required for G-protein localization and trafficking in sensory neurons. Probably plays a role in trafficking proteins in photoreceptor cells. Plays important roles in mediating Src family kinase signals for the completion of cytokinesis via RAB11A. The protein is Protein unc-119 homolog A (UNC119) of Canis lupus familiaris (Dog).